The primary structure comprises 317 residues: Cytochrome c biogenesis protein CcsA (317 aa).

7 consecutive transmembrane segments (helical) span residues 13–35 (ISFSIIAIVITTHLMTLLVHEIV), 44–64 (GMIATFFCITGLLVTRWIYSG), 71–91 (LYESLMFLSWSFSLILMVPYF), 143–163 (MLLSYAALLCGSLLSIALLVI), 171–191 (MIGFTNHLLIWPFSFGEIKYL), 225–245 (VIGLGFTFSTIGILSGAVWAN), and 286–306 (AIVASMGFLIIWICYFGVNLL).

Belongs to the CcmF/CycK/Ccl1/NrfE/CcsA family. May interact with Ccs1.

The protein resides in the plastid. The protein localises to the chloroplast thylakoid membrane. Its function is as follows. Required during biogenesis of c-type cytochromes (cytochrome c6 and cytochrome f) at the step of heme attachment. The protein is Cytochrome c biogenesis protein CcsA of Illicium oligandrum (Star anise).